The sequence spans 157 residues: Ribonuclease H (157 aa).

Positions 3–144 (ELKQLYIFTD…CDVLARKAAE (142 aa)) constitute an RNase H type-1 domain. Positions 12, 50, 72, and 136 each coordinate Mg(2+).

This sequence belongs to the RNase H family. As to quaternary structure, monomer. Mg(2+) is required as a cofactor.

It localises to the cytoplasm. It carries out the reaction Endonucleolytic cleavage to 5'-phosphomonoester.. In terms of biological role, endonuclease that specifically degrades the RNA of RNA-DNA hybrids. In Shewanella frigidimarina (strain NCIMB 400), this protein is Ribonuclease H.